A 149-amino-acid polypeptide reads, in one-letter code: Glutamate mutase sigma subunit (149 aa).

The B12-binding domain maps to 3–140 (KATLVIGVIG…AHDINQRHDV (138 aa)). Residues 13–17 (ADCHA), His16, 61–63 (SSI), and 93–97 (NLVVG) each bind adenosylcob(III)alamin.

The protein belongs to the methylaspartate mutase GlmS subunit family. Heterotetramer composed of 2 epsilon subunits (GlmE) and 2 sigma subunits (GlmS). GlmE exists as a homodimer and GlmS as a monomer. The cofactor is adenosylcob(III)alamin.

It carries out the reaction (2S,3S)-3-methyl-L-aspartate = L-glutamate. The protein operates within amino-acid degradation; L-glutamate degradation via mesaconate pathway; acetate and pyruvate from L-glutamate: step 1/4. Its function is as follows. Catalyzes the carbon skeleton rearrangement of L-glutamate to L-threo-3-methylaspartate ((2S,3S)-3-methylaspartate). The protein is Glutamate mutase sigma subunit of Escherichia coli O157:H7.